The following is a 731-amino-acid chain: 1,4-alpha-glucan branching enzyme GlgB (731 aa).

D411 (nucleophile) is an active-site residue. E464 functions as the Proton donor in the catalytic mechanism.

It belongs to the glycosyl hydrolase 13 family. GlgB subfamily. As to quaternary structure, monomer.

The enzyme catalyses Transfers a segment of a (1-&gt;4)-alpha-D-glucan chain to a primary hydroxy group in a similar glucan chain.. It participates in glycan biosynthesis; glycogen biosynthesis. In terms of biological role, catalyzes the formation of the alpha-1,6-glucosidic linkages in glycogen by scission of a 1,4-alpha-linked oligosaccharide from growing alpha-1,4-glucan chains and the subsequent attachment of the oligosaccharide to the alpha-1,6 position. The polypeptide is 1,4-alpha-glucan branching enzyme GlgB (Mycobacterium ulcerans (strain Agy99)).